The chain runs to 230 residues: SPbeta prophage-derived putative HNH endonuclease YoqL (230 aa).

Positions 136–188 constitute an HNH domain; sequence CSYCGLKIEDHKILFKGTYIQSDFHKEHVDHKGANDISNCIPACKSCNSSKHD.

The protein belongs to the HNH nuclease family.

In Bacillus subtilis (strain 168), this protein is SPbeta prophage-derived putative HNH endonuclease YoqL (yoqL).